The chain runs to 171 residues: Shikimate kinase (171 aa).

14–19 contributes to the ATP binding site; sequence GAGKST. Ser18 is a Mg(2+) binding site. Substrate is bound by residues Asp36, Arg60, and Gly82. An ATP-binding site is contributed by Arg120. Residue Arg139 participates in substrate binding. ATP is bound at residue Gln156.

The protein belongs to the shikimate kinase family. In terms of assembly, monomer. The cofactor is Mg(2+).

Its subcellular location is the cytoplasm. It catalyses the reaction shikimate + ATP = 3-phosphoshikimate + ADP + H(+). Its pathway is metabolic intermediate biosynthesis; chorismate biosynthesis; chorismate from D-erythrose 4-phosphate and phosphoenolpyruvate: step 5/7. Functionally, catalyzes the specific phosphorylation of the 3-hydroxyl group of shikimic acid using ATP as a cosubstrate. The chain is Shikimate kinase from Shewanella pealeana (strain ATCC 700345 / ANG-SQ1).